We begin with the raw amino-acid sequence, 86 residues long: MKTLLLTLVVVTIVCLDLGYTLTCLNCPEMFCGKFQTCRNGEKICFKMLQQRRPFSLRYIRGCAATCPGTKPRDMVECCNTDRCNR.

The signal sequence occupies residues 1–21; the sequence is MKTLLLTLVVVTIVCLDLGYT. 5 disulfides stabilise this stretch: Cys24-Cys45, Cys27-Cys32, Cys38-Cys63, Cys67-Cys78, and Cys79-Cys84.

Belongs to the three-finger toxin family. Ancestral subfamily. Orphan group II sub-subfamily. Expressed by the venom gland.

Its subcellular location is the secreted. In terms of biological role, binds with low affinity to muscular (alpha-1-beta-1-delta-epsilon/CHRNA1-CHRNB1-CHRND-CHRNE) and very low affinity to neuronal (alpha-7/CHRNA7) nicotinic acetylcholine receptor (nAChR). In Naja sputatrix (Malayan spitting cobra), this protein is Weak neurotoxin 9.